The chain runs to 120 residues: MFVLPGYDAFLGFLLIAAAVPVLALVTNKLLAPRSQDGERQLTYESGMEPIGGAWIQFNIRYYMFALVFVIFDVETVFLYPWAVAFHRLGLLAFIEALIFIAILVVALAYAWRKGALEWS.

A run of 3 helical transmembrane segments spans residues 6-26, 64-84, and 89-109; these read GYDA…LALV, MFAL…PWAV, and LGLL…VALA.

This sequence belongs to the complex I subunit 3 family. NDH-1 can be composed of about 15 different subunits; different subcomplexes with different compositions have been identified which probably have different functions.

Its subcellular location is the cellular thylakoid membrane. It carries out the reaction a plastoquinone + NADH + (n+1) H(+)(in) = a plastoquinol + NAD(+) + n H(+)(out). The catalysed reaction is a plastoquinone + NADPH + (n+1) H(+)(in) = a plastoquinol + NADP(+) + n H(+)(out). Functionally, NDH-1 shuttles electrons from an unknown electron donor, via FMN and iron-sulfur (Fe-S) centers, to quinones in the respiratory and/or the photosynthetic chain. The immediate electron acceptor for the enzyme in this species is believed to be plastoquinone. Couples the redox reaction to proton translocation, and thus conserves the redox energy in a proton gradient. Cyanobacterial NDH-1 also plays a role in inorganic carbon-concentration. This is NAD(P)H-quinone oxidoreductase subunit 3 from Synechococcus sp. (strain WH7803).